The primary structure comprises 239 residues: 1-(5-phosphoribosyl)-5-[(5-phosphoribosylamino)methylideneamino] imidazole-4-carboxamide isomerase (239 aa).

Asp-12 (proton acceptor) is an active-site residue. Asp-132 serves as the catalytic Proton donor.

This sequence belongs to the HisA/HisF family.

It localises to the cytoplasm. It catalyses the reaction 1-(5-phospho-beta-D-ribosyl)-5-[(5-phospho-beta-D-ribosylamino)methylideneamino]imidazole-4-carboxamide = 5-[(5-phospho-1-deoxy-D-ribulos-1-ylimino)methylamino]-1-(5-phospho-beta-D-ribosyl)imidazole-4-carboxamide. Its pathway is amino-acid biosynthesis; L-histidine biosynthesis; L-histidine from 5-phospho-alpha-D-ribose 1-diphosphate: step 4/9. In Natronomonas pharaonis (strain ATCC 35678 / DSM 2160 / CIP 103997 / JCM 8858 / NBRC 14720 / NCIMB 2260 / Gabara) (Halobacterium pharaonis), this protein is 1-(5-phosphoribosyl)-5-[(5-phosphoribosylamino)methylideneamino] imidazole-4-carboxamide isomerase.